A 335-amino-acid polypeptide reads, in one-letter code: DNA-directed RNA polymerase subunit alpha (335 aa).

An alpha N-terminal domain (alpha-NTD) region spans residues 1-233 (MTAVNDFLTP…QQIAVFVDLE (233 aa)). The alpha C-terminal domain (alpha-CTD) stretch occupies residues 247–335 (IDPILLRPVD…DDDRLNAKLR (89 aa)).

Belongs to the RNA polymerase alpha chain family. Homodimer. The RNAP catalytic core consists of 2 alpha, 1 beta, 1 beta' and 1 omega subunit. When a sigma factor is associated with the core the holoenzyme is formed, which can initiate transcription.

It carries out the reaction RNA(n) + a ribonucleoside 5'-triphosphate = RNA(n+1) + diphosphate. Its function is as follows. DNA-dependent RNA polymerase catalyzes the transcription of DNA into RNA using the four ribonucleoside triphosphates as substrates. This Alcanivorax borkumensis (strain ATCC 700651 / DSM 11573 / NCIMB 13689 / SK2) protein is DNA-directed RNA polymerase subunit alpha.